Reading from the N-terminus, the 115-residue chain is Large ribosomal subunit protein bL19 (115 aa).

This sequence belongs to the bacterial ribosomal protein bL19 family.

Its function is as follows. This protein is located at the 30S-50S ribosomal subunit interface and may play a role in the structure and function of the aminoacyl-tRNA binding site. In Desulfovibrio desulfuricans (strain ATCC 27774 / DSM 6949 / MB), this protein is Large ribosomal subunit protein bL19.